A 402-amino-acid chain; its full sequence is Serine--glyoxylate aminotransferase (402 aa).

Residue K201 is modified to N6-(pyridoxal phosphate)lysine.

It belongs to the class-V pyridoxal-phosphate-dependent aminotransferase family. Requires pyridoxal 5'-phosphate as cofactor.

It catalyses the reaction glyoxylate + L-serine = 3-hydroxypyruvate + glycine. The protein operates within one-carbon metabolism; formaldehyde assimilation via serine pathway. This is Serine--glyoxylate aminotransferase from Methylorubrum extorquens (strain ATCC 14718 / DSM 1338 / JCM 2805 / NCIMB 9133 / AM1) (Methylobacterium extorquens).